The following is a 385-amino-acid chain: 1-deoxy-D-xylulose 5-phosphate reductoisomerase (385 aa).

NADPH contacts are provided by threonine 11, glycine 12, serine 13, isoleucine 14, asparagine 39, and asparagine 123. Residue lysine 124 coordinates 1-deoxy-D-xylulose 5-phosphate. Residue glutamate 125 participates in NADPH binding. Aspartate 149 contacts Mn(2+). The 1-deoxy-D-xylulose 5-phosphate site is built by serine 150, glutamate 151, serine 174, and histidine 197. Glutamate 151 is a binding site for Mn(2+). Glycine 203 lines the NADPH pocket. Residues serine 210, asparagine 215, lysine 216, and glutamate 219 each contribute to the 1-deoxy-D-xylulose 5-phosphate site. Residue glutamate 219 coordinates Mn(2+).

The protein belongs to the DXR family. Mg(2+) serves as cofactor. The cofactor is Mn(2+).

The catalysed reaction is 2-C-methyl-D-erythritol 4-phosphate + NADP(+) = 1-deoxy-D-xylulose 5-phosphate + NADPH + H(+). The protein operates within isoprenoid biosynthesis; isopentenyl diphosphate biosynthesis via DXP pathway; isopentenyl diphosphate from 1-deoxy-D-xylulose 5-phosphate: step 1/6. Catalyzes the NADPH-dependent rearrangement and reduction of 1-deoxy-D-xylulose-5-phosphate (DXP) to 2-C-methyl-D-erythritol 4-phosphate (MEP). The protein is 1-deoxy-D-xylulose 5-phosphate reductoisomerase of Porphyromonas gingivalis (strain ATCC 33277 / DSM 20709 / CIP 103683 / JCM 12257 / NCTC 11834 / 2561).